The chain runs to 156 residues: ATP synthase subunit b (156 aa).

Residues 12–32 traverse the membrane as a helical segment; sequence VAFLIFVLFCMKYVWPPVITA.

This sequence belongs to the ATPase B chain family. F-type ATPases have 2 components, F(1) - the catalytic core - and F(0) - the membrane proton channel. F(1) has five subunits: alpha(3), beta(3), gamma(1), delta(1), epsilon(1). F(0) has three main subunits: a(1), b(2) and c(10-14). The alpha and beta chains form an alternating ring which encloses part of the gamma chain. F(1) is attached to F(0) by a central stalk formed by the gamma and epsilon chains, while a peripheral stalk is formed by the delta and b chains.

The protein localises to the cell inner membrane. In terms of biological role, f(1)F(0) ATP synthase produces ATP from ADP in the presence of a proton or sodium gradient. F-type ATPases consist of two structural domains, F(1) containing the extramembraneous catalytic core and F(0) containing the membrane proton channel, linked together by a central stalk and a peripheral stalk. During catalysis, ATP synthesis in the catalytic domain of F(1) is coupled via a rotary mechanism of the central stalk subunits to proton translocation. Functionally, component of the F(0) channel, it forms part of the peripheral stalk, linking F(1) to F(0). This Pseudomonas putida (strain GB-1) protein is ATP synthase subunit b.